Reading from the N-terminus, the 311-residue chain is Biotin synthase (311 aa).

Residues 32–258 (NGVQFCQLLN…LFPLSRIRLA (227 aa)) enclose the Radical SAM core domain. [4Fe-4S] cluster is bound by residues cysteine 47, cysteine 51, and cysteine 54. Positions 91, 124, 184, and 256 each coordinate [2Fe-2S] cluster.

It belongs to the radical SAM superfamily. Biotin synthase family. As to quaternary structure, homodimer. The cofactor is [4Fe-4S] cluster. Requires [2Fe-2S] cluster as cofactor.

The enzyme catalyses (4R,5S)-dethiobiotin + (sulfur carrier)-SH + 2 reduced [2Fe-2S]-[ferredoxin] + 2 S-adenosyl-L-methionine = (sulfur carrier)-H + biotin + 2 5'-deoxyadenosine + 2 L-methionine + 2 oxidized [2Fe-2S]-[ferredoxin]. It participates in cofactor biosynthesis; biotin biosynthesis; biotin from 7,8-diaminononanoate: step 2/2. Functionally, catalyzes the conversion of dethiobiotin (DTB) to biotin by the insertion of a sulfur atom into dethiobiotin via a radical-based mechanism. This Methylacidiphilum infernorum (isolate V4) (Methylokorus infernorum (strain V4)) protein is Biotin synthase.